Consider the following 223-residue polypeptide: Mediator of RNA polymerase II transcription subunit 8 (223 aa).

The interval 2-138 (SQSTASLVPE…VRETSGVTTA (137 aa)) is interaction with TBP1. The stretch at 33–59 (LDAVRMRLAQLTHSLRRIRDEMSKAEL) forms a coiled coil.

This sequence belongs to the Mediator complex subunit 8 family. Component of the Mediator complex, which is composed of at least 21 subunits that form three structurally distinct submodules. The Mediator head module contains MED6, MED8, MED11, SRB4/MED17, SRB5/MED18, ROX3/MED19, SRB2/MED20 and SRB6/MED22, the middle module contains MED1, MED4, NUT1/MED5, MED7, CSE2/MED9, NUT2/MED10, SRB7/MED21 and SOH1/MED31, and the tail module contains MED2, PGD1/MED3, RGR1/MED14, GAL11/MED15 and SIN4/MED16. The head and the middle modules interact directly with RNA polymerase II, whereas the elongated tail module interacts with gene-specific regulatory proteins. MED8 interacts directly with SRB5/MED18. Also interacts with Hexokinase B (HXK2). Interacts with TBP1.

The protein localises to the nucleus. Functionally, component of the Mediator complex, a coactivator involved in the regulated transcription of nearly all RNA polymerase II-dependent genes. Mediator functions as a bridge to convey information from gene-specific regulatory proteins to the basal RNA polymerase II transcription machinery. The Mediator complex, having a compact conformation in its free form, is recruited to promoters by direct interactions with regulatory proteins and serves for the assembly of a functional preinitiation complex with RNA polymerase II and the general transcription factors. The Mediator complex unfolds to an extended conformation and partially surrounds RNA polymerase II, specifically interacting with the unphosphorylated form of the C-terminal domain (CTD) of RNA polymerase II. The Mediator complex dissociates from the RNA polymerase II holoenzyme and stays at the promoter when transcriptional elongation begins. MED8 binds to the consensus sequence 5'-[AC][AG]GAAAT-3' in both the UAS of SUC2 and the DRS2 of HXK2. The protein is Mediator of RNA polymerase II transcription subunit 8 (MED8) of Saccharomyces cerevisiae (strain ATCC 204508 / S288c) (Baker's yeast).